Reading from the N-terminus, the 164-residue chain is Transcription elongation factor GreA (164 aa).

Positions 50–76 (YHAAREEQGQQEARIRQLQELLNNAKV) form a coiled coil.

Belongs to the GreA/GreB family.

Its function is as follows. Necessary for efficient RNA polymerase transcription elongation past template-encoded arresting sites. The arresting sites in DNA have the property of trapping a certain fraction of elongating RNA polymerases that pass through, resulting in locked ternary complexes. Cleavage of the nascent transcript by cleavage factors such as GreA or GreB allows the resumption of elongation from the new 3'terminus. GreA releases sequences of 2 to 3 nucleotides. The protein is Transcription elongation factor GreA of Mycolicibacterium smegmatis (strain ATCC 700084 / mc(2)155) (Mycobacterium smegmatis).